A 453-amino-acid polypeptide reads, in one-letter code: Pup--protein ligase (453 aa).

E9 contributes to the Mg(2+) binding site. R53 is an ATP binding site. Y55 contacts Mg(2+). The active-site Proton acceptor is the D57. E63 lines the Mg(2+) pocket. T66 and W420 together coordinate ATP.

Belongs to the Pup ligase/Pup deamidase family. Pup-conjugating enzyme subfamily.

It catalyses the reaction ATP + [prokaryotic ubiquitin-like protein]-L-glutamate + [protein]-L-lysine = ADP + phosphate + N(6)-([prokaryotic ubiquitin-like protein]-gamma-L-glutamyl)-[protein]-L-lysine.. It participates in protein degradation; proteasomal Pup-dependent pathway. The protein operates within protein modification; protein pupylation. Functionally, catalyzes the covalent attachment of the prokaryotic ubiquitin-like protein modifier Pup to the proteasomal substrate proteins, thereby targeting them for proteasomal degradation. This tagging system is termed pupylation. The ligation reaction involves the side-chain carboxylate of the C-terminal glutamate of Pup and the side-chain amino group of a substrate lysine. This is Pup--protein ligase from Streptomyces scabiei (strain 87.22).